We begin with the raw amino-acid sequence, 215 residues long: Cytochrome b6 (215 aa).

Residues 32–52 form a helical membrane-spanning segment; that stretch reads IFYCLGGITLTCFLVQIATGF. Cys35 is a binding site for heme c. Heme b contacts are provided by His86 and His100. 3 consecutive transmembrane segments (helical) span residues 90 to 110, 116 to 136, and 186 to 206; these read ASMM…TGGF, LTWV…VTGY, and LHTF…FLMI. Residues His187 and His202 each coordinate heme b.

It belongs to the cytochrome b family. PetB subfamily. In terms of assembly, the 4 large subunits of the cytochrome b6-f complex are cytochrome b6, subunit IV (17 kDa polypeptide, PetD), cytochrome f and the Rieske protein, while the 4 small subunits are PetG, PetL, PetM and PetN. The complex functions as a dimer. The cofactor is heme b. Requires heme c as cofactor.

Its subcellular location is the plastid. The protein localises to the chloroplast thylakoid membrane. Functionally, component of the cytochrome b6-f complex, which mediates electron transfer between photosystem II (PSII) and photosystem I (PSI), cyclic electron flow around PSI, and state transitions. The sequence is that of Cytochrome b6 from Adiantum capillus-veneris (Maidenhair fern).